Reading from the N-terminus, the 79-residue chain is ATP synthase subunit c (79 aa).

The next 2 membrane-spanning stretches (helical) occupy residues 11–31 (IAVA…IGIL) and 53–73 (FFVV…LGLY).

Belongs to the ATPase C chain family. As to quaternary structure, F-type ATPases have 2 components, F(1) - the catalytic core - and F(0) - the membrane proton channel. F(1) has five subunits: alpha(3), beta(3), gamma(1), delta(1), epsilon(1). F(0) has three main subunits: a(1), b(2) and c(10-14). The alpha and beta chains form an alternating ring which encloses part of the gamma chain. F(1) is attached to F(0) by a central stalk formed by the gamma and epsilon chains, while a peripheral stalk is formed by the delta and b chains.

The protein localises to the cell membrane. Functionally, f(1)F(0) ATP synthase produces ATP from ADP in the presence of a proton or sodium gradient. F-type ATPases consist of two structural domains, F(1) containing the extramembraneous catalytic core and F(0) containing the membrane proton channel, linked together by a central stalk and a peripheral stalk. During catalysis, ATP synthesis in the catalytic domain of F(1) is coupled via a rotary mechanism of the central stalk subunits to proton translocation. Key component of the F(0) channel; it plays a direct role in translocation across the membrane. A homomeric c-ring of between 10-14 subunits forms the central stalk rotor element with the F(1) delta and epsilon subunits. The protein is ATP synthase subunit c of Buchnera aphidicola subsp. Acyrthosiphon pisum (strain 5A).